The following is a 230-amino-acid chain: Uracil-DNA glycosylase (230 aa).

The active-site Proton acceptor is aspartate 70.

It belongs to the uracil-DNA glycosylase (UDG) superfamily. UNG family.

It is found in the cytoplasm. It catalyses the reaction Hydrolyzes single-stranded DNA or mismatched double-stranded DNA and polynucleotides, releasing free uracil.. Excises uracil residues from the DNA which can arise as a result of misincorporation of dUMP residues by DNA polymerase or due to deamination of cytosine. The polypeptide is Uracil-DNA glycosylase (Pseudomonas syringae pv. tomato (strain ATCC BAA-871 / DC3000)).